The following is a 593-amino-acid chain: Aspartate--tRNA ligase (593 aa).

An L-aspartate-binding site is contributed by Glu-173. Residues 197–200 (QLFK) are aspartate. Arg-219 contacts L-aspartate. ATP is bound by residues 219-221 (RDE) and Gln-228. Residue His-448 participates in L-aspartate binding. Residue Glu-482 participates in ATP binding. Arg-489 lines the L-aspartate pocket. An ATP-binding site is contributed by 534–537 (GLDR).

The protein belongs to the class-II aminoacyl-tRNA synthetase family. Type 1 subfamily. In terms of assembly, homodimer.

It is found in the cytoplasm. It catalyses the reaction tRNA(Asp) + L-aspartate + ATP = L-aspartyl-tRNA(Asp) + AMP + diphosphate. Its function is as follows. Catalyzes the attachment of L-aspartate to tRNA(Asp) in a two-step reaction: L-aspartate is first activated by ATP to form Asp-AMP and then transferred to the acceptor end of tRNA(Asp). The sequence is that of Aspartate--tRNA ligase from Shewanella denitrificans (strain OS217 / ATCC BAA-1090 / DSM 15013).